The chain runs to 328 residues: tRNA uridine(34) hydroxylase (328 aa).

Residues 123-217 (SDPETVLIDT…YLEEVPKEKS (95 aa)) enclose the Rhodanese domain. Catalysis depends on Cys177, which acts as the Cysteine persulfide intermediate. The segment at 304–328 (AKKLAQLNKQKKQQAKEAARKKAQQ) is disordered. Residues 317–328 (QAKEAARKKAQQ) are compositionally biased toward basic and acidic residues.

Belongs to the TrhO family.

It carries out the reaction uridine(34) in tRNA + AH2 + O2 = 5-hydroxyuridine(34) in tRNA + A + H2O. In terms of biological role, catalyzes oxygen-dependent 5-hydroxyuridine (ho5U) modification at position 34 in tRNAs. The chain is tRNA uridine(34) hydroxylase from Francisella tularensis subsp. holarctica (strain LVS).